The sequence spans 212 residues: Pyridoxine/pyridoxamine 5'-phosphate oxidase (212 aa).

Residues 7 to 10 and lysine 65 contribute to the substrate site; that span reads RRQY. Residues 60 to 65, 75 to 76, arginine 81, lysine 82, and glutamine 104 contribute to the FMN site; these read RIVLLK and FT. 3 residues coordinate substrate: tyrosine 122, arginine 126, and serine 130. FMN contacts are provided by residues 139–140 and tryptophan 184; that span reads QS. 190–192 contributes to the substrate binding site; sequence RLH. An FMN-binding site is contributed by arginine 194.

Belongs to the pyridoxamine 5'-phosphate oxidase family. In terms of assembly, homodimer. Requires FMN as cofactor.

It catalyses the reaction pyridoxamine 5'-phosphate + O2 + H2O = pyridoxal 5'-phosphate + H2O2 + NH4(+). The enzyme catalyses pyridoxine 5'-phosphate + O2 = pyridoxal 5'-phosphate + H2O2. Its pathway is cofactor metabolism; pyridoxal 5'-phosphate salvage; pyridoxal 5'-phosphate from pyridoxamine 5'-phosphate: step 1/1. The protein operates within cofactor metabolism; pyridoxal 5'-phosphate salvage; pyridoxal 5'-phosphate from pyridoxine 5'-phosphate: step 1/1. Catalyzes the oxidation of either pyridoxine 5'-phosphate (PNP) or pyridoxamine 5'-phosphate (PMP) into pyridoxal 5'-phosphate (PLP). The polypeptide is Pyridoxine/pyridoxamine 5'-phosphate oxidase (Alteromonas mediterranea (strain DSM 17117 / CIP 110805 / LMG 28347 / Deep ecotype)).